A 346-amino-acid chain; its full sequence is Dehydrogenase azaJ (346 aa).

43-48 (VDYATQ) is a binding site for NADP(+). Residue 133-140 (LAFSTAIV) coordinates substrate. Residues 170–173 (ATSV), 193–196 (SPHN), Tyr211, and 251–252 (LN) each bind NADP(+). 269-273 (APPNV) is a substrate binding site. Position 336 to 337 (336 to 337 (VS)) interacts with NADP(+).

It belongs to the zinc-containing alcohol dehydrogenase family.

It functions in the pathway secondary metabolite biosynthesis. In terms of biological role, dehydrogenase; part of the gene cluster that mediates the biosynthesis of azaphilones, a class of fungal metabolites characterized by a highly oxygenated pyrano-quinone bicyclic core and exhibiting a broad range of bioactivities. In the first step, the non-reducing polyketide synthase azaA forms the hexaketide precursor from successive condensations of five malonyl-CoA units, presumably with a simple acetyl-CoA starter unit. The reactive polyketide chain then undergoes a PT-mediated C2-C7 cyclization to afford the aromatic ring and is eventually released as an aldehyde through the R-domain. The putative ketoreductase azaE is proposed to catalyze the reduction of the terminal ketone resulting in the early culture product FK17-P2a. The monooxygenase azaH was demonstrated to be the only enzyme required to convert FK17-P2a to azanigerone E. AzaH first hydroxylates the benzaldehyde intermediate FK17-P2a at C4, which triggers the formation of the pyran-ring to afford azanigerone E. In parallel, the 2,4-dimethylhexanoyl chain is synthesized by the HR-PKS azaB and is proposed to be transferred to the C4-hydroxyl of azanigerone E by the acyltransferase azaD directly from the ACP domain of azaB. Alternatively, the 2,4-dimethyl-hexanoyl chain may be offloaded from the HR-PKS as a carboxylic acid and converted to an acyl-CoA by azaF. The resulting acyl-CoA molecule could then be taken up as a substrate by AzaD to form azanigerone B. To yield the carboxylic acid substituent in azanigerone A, the hydroxypropyl side chain of azanigerone B would need to undergo a C-C oxidative cleavage catalyzed by cytochrome P450 AzaI. AzaI is proposed to act on a vicinal diol that leads to a C-C bond scission either through an alkoxyradical intermediate or a peroxy complex. In the biosynthesis of azanigerone A, azanigerone B first undergoes hydroxylation at C10, possibly catalyzed by one of the two FAD-dependent monooxygenases encoded in the cluster, azaG or azaL, resulting in the vicinal diol azanigerone C. Oxidative cleavage of azanigerone C by azaI would yield the corresponding aldehyde derivative of azanigerone A. Finally, the dehydrogenase azaJ is proposed to convert the aldehyde functional group into the carboxylic acid, completing the conversion from azanigerone B to azanigerone A. Alternatively, the oxidation of aldehyde to carboxylic acid may be catalyzed by the same P450 enzyme azaI via consecutive oxidation or by endogenous alcohol dehydrogenase. The chain is Dehydrogenase azaJ from Aspergillus niger (strain ATCC 1015 / CBS 113.46 / FGSC A1144 / LSHB Ac4 / NCTC 3858a / NRRL 328 / USDA 3528.7).